Here is a 227-residue protein sequence, read N- to C-terminus: GTP:AMP phosphotransferase AK3, mitochondrial (227 aa).

Residues G17, G19, K20, G21, and T22 each coordinate GTP. At K20 the chain carries N6-succinyllysine. The residue at position 34 (K34) is an N6-acetyllysine. S37 carries the phosphoserine modification. The tract at residues S37–I66 is NMP. Residues S38 and R43 each coordinate AMP. K57 carries the N6-succinyllysine modification. K64 is a binding site for AMP. 2 positions are modified to N6-acetyllysine; alternate: K64 and K80. N6-succinyllysine; alternate is present on residues K64 and K80. 3 residues coordinate AMP: G91, R94, and Q98. The interval A127–D164 is LID. GTP contacts are provided by R128, Y138, N139, R161, and R172. Residues K174 and K189 each carry the N6-acetyllysine; alternate modification. N6-succinyllysine; alternate is present on residues K174 and K189. T201 contacts GTP. Residue K203 is modified to N6-acetyllysine.

The protein belongs to the adenylate kinase family. AK3 subfamily. Monomer.

The protein resides in the mitochondrion matrix. It catalyses the reaction a ribonucleoside 5'-triphosphate + AMP = a ribonucleoside 5'-diphosphate + ADP. The enzyme catalyses GTP + AMP = GDP + ADP. The catalysed reaction is ITP + AMP = IDP + ADP. Mitochondrial adenylate kinase with a specific GTP:AMP phosphotransferase activity. Could also use ITP as phosphate donor. Its physiological function is to recycle GTP into GDP which is necessary for the TCA cycle in the mitochondrial matrix. This Pongo abelii (Sumatran orangutan) protein is GTP:AMP phosphotransferase AK3, mitochondrial.